We begin with the raw amino-acid sequence, 373 residues long: Probable pectin lyase C (373 aa).

The first 17 residues, 1-17 (MKKYLLSLLAAVTYTTA), serve as a signal peptide directing secretion. 2 disulfides stabilise this stretch: C78/C95 and C87/C215. N140 and N229 each carry an N-linked (GlcNAc...) asparagine glycan. R245 is an active-site residue. The cysteines at positions 315 and 323 are disulfide-linked.

It belongs to the polysaccharide lyase 1 family.

The protein localises to the secreted. The enzyme catalyses Eliminative cleavage of (1-&gt;4)-alpha-D-galacturonan methyl ester to give oligosaccharides with 4-deoxy-6-O-methyl-alpha-D-galact-4-enuronosyl groups at their non-reducing ends.. Functionally, pectinolytic enzymes consist of four classes of enzymes: pectin lyase, polygalacturonase, pectin methylesterase and rhamnogalacturonase. Among pectinolytic enzymes, pectin lyase is the most important in depolymerization of pectin, since it cleaves internal glycosidic bonds of highly methylated pectins. In Emericella nidulans (strain FGSC A4 / ATCC 38163 / CBS 112.46 / NRRL 194 / M139) (Aspergillus nidulans), this protein is Probable pectin lyase C (pelC).